A 613-amino-acid polypeptide reads, in one-letter code: Potassium voltage-gated channel subfamily A member 5 (613 aa).

Positions 1–108 are disordered; the sequence is MEIALVPLEN…EGDPGLGTVE (108 aa). Residues 1 to 211 form a tetramerization domain region; it reads MEIALVPLEN…FYQLGDEAME (211 aa). The Cytoplasmic segment spans residues 1 to 247; that stretch reads MEIALVPLEN…LIFEYPESSG (247 aa). Positions 45–62 are enriched in basic and acidic residues; it reads GPKEPAPKGRGAQRDADS. A run of 2 repeats spans residues 61-71 and 72-82. The 2 X 11 AA tandem repeat of D-[SP]-G-V-R-P-L-P-P-L-P stretch occupies residues 61-82; it reads DSGVRPLPPLPDPGVRPLPPLP. Residues 66–83 show a composition bias toward pro residues; that stretch reads PLPPLPDPGVRPLPPLPE. Over residues 84 to 93 the composition is skewed to basic and acidic residues; it reads ELPRPRRPPP. Lys-221 participates in a covalent cross-link: Glycyl lysine isopeptide (Lys-Gly) (interchain with G-Cter in SUMO). The helical transmembrane segment at 248 to 269 threads the bilayer; sequence SARAIAIVSVLVILISIITFCL. The Extracellular segment spans residues 270–323; that stretch reads ETLPEFRDERELLRHPPAPHQPPAPAPGANGSGVMAPPSGPTVAPLLPRTLADP. The segment at 282–304 is disordered; it reads LRHPPAPHQPPAPAPGANGSGVM. The segment covering 285–295 has biased composition (pro residues); it reads PPAPHQPPAPA. The helical transmembrane segment at 324–345 threads the bilayer; the sequence is FFIVETTCVIWFTFELLVRFFA. Cys-346 carries S-palmitoyl cysteine lipidation. At 346 to 356 the chain is on the cytoplasmic side; that stretch reads CPSKAGFSRNI. Residues 357-377 traverse the membrane as a helical segment; the sequence is MNIIDVVAIFPYFITLGTELA. Topologically, residues 378–395 are extracellular; that stretch reads EQQPGGGGGGQNGQQAMS. Residues 396–416 traverse the membrane as a helical; Voltage-sensor segment; sequence LAILRVIRLVRVFRIFKLSRH. Over 417–431 the chain is Cytoplasmic; sequence SKGLQILGKTLQASM. An S4-S5 linker region spans residues 418-431; the sequence is KGLQILGKTLQASM. A helical transmembrane segment spans residues 432 to 453; that stretch reads RELGLLIFFLFIGVILFSSAVY. At 454–467 the chain is on the extracellular side; that stretch reads FAEADNQGTHFSSI. The segment at residues 468–479 is an intramembrane region (helical); that stretch reads PDAFWWAVVTMT. Residues 480–485 carry the Selectivity filter motif; that stretch reads TVGYGD. The stretch at 480-487 is an intramembrane region; it reads TVGYGDMR. Residues 488–494 lie on the Extracellular side of the membrane; the sequence is PITVGGK. A helical transmembrane segment spans residues 495–523; that stretch reads IVGSLCAIAGVLTIALPVPVIVSNFNYFY. The Cytoplasmic segment spans residues 524–613; sequence HRETDHEEPA…CLDTSRETDL (90 aa). The disordered stretch occupies residues 532–559; it reads PAVLKEEQGTQSQGPGLDRGVQRKVSGS. A Glycyl lysine isopeptide (Lys-Gly) (interchain with G-Cter in SUMO) cross-link involves residue Lys-536. Ser-557 carries the phosphoserine; by PKA modification. The PDZ-binding signature appears at 611–613; the sequence is TDL.

The protein belongs to the potassium channel family. A (Shaker) (TC 1.A.1.2) subfamily. Kv1.5/KCNA5 sub-subfamily. Homotetramer and heterotetramer of potassium channel proteins. Interacts with DLG1, which enhances channel currents. Forms a ternary complex with DLG1 and CAV3. Interacts with KCNAB1. Interacts with UBE2I. Interacts with XIRP2; the interaction is required for normal action potential configuration in the heart. In terms of processing, glycosylated. Post-translationally, sumoylated on Lys-221, and Lys-536, preferentially with SUMO3. Sumoylation regulates the voltage sensitivity of the channel. As to expression, pancreatic islets and insulinoma.

It localises to the cell membrane. The catalysed reaction is K(+)(in) = K(+)(out). Inhibited by 4-aminopyridine, nicotine, bepridil, correolide, and endothelin-1. Functionally, voltage-gated potassium channel that mediates transmembrane potassium transport in excitable membranes. Forms tetrameric potassium-selective channels through which potassium ions pass in accordance with their electrochemical gradient. The channel alternates between opened and closed conformations in response to the voltage difference across the membrane. Can form functional homotetrameric channels and heterotetrameric channels that contain variable proportions of KCNA1, KCNA2, KCNA4, KCNA5, and possibly other family members as well; channel properties depend on the type of alpha subunits that are part of the channel. Channel properties are modulated by cytoplasmic beta subunits that regulate the subcellular location of the alpha subunits and promote rapid inactivation. Homotetrameric channels display rapid activation and slow inactivation. Required for normal electrical conduction including formation of the infranodal ventricular conduction system and normal action potential configuration, as a result of its interaction with XIRP2. May play a role in regulating the secretion of insulin in normal pancreatic islets. In terms of biological role, exhibits a faster depolarization rate, reduced voltage-dependent recovery from inactivation and an excessive cumulative inactivation. The chain is Potassium voltage-gated channel subfamily A member 5 (KCNA5) from Homo sapiens (Human).